A 126-amino-acid polypeptide reads, in one-letter code: Small ribosomal subunit protein uS12 (126 aa).

A disordered region spans residues 1 to 28 (MPTINQLVRKGRQSETTKSKSPALQDCP). Aspartate 89 is modified (3-methylthioaspartic acid). The segment at 103-126 (DTQGVKDRKQARSKYGAKRAKAAK) is disordered. The span at 113-126 (ARSKYGAKRAKAAK) shows a compositional bias: basic residues.

The protein belongs to the universal ribosomal protein uS12 family. In terms of assembly, part of the 30S ribosomal subunit. Contacts proteins S8 and S17. May interact with IF1 in the 30S initiation complex.

In terms of biological role, with S4 and S5 plays an important role in translational accuracy. Its function is as follows. Interacts with and stabilizes bases of the 16S rRNA that are involved in tRNA selection in the A site and with the mRNA backbone. Located at the interface of the 30S and 50S subunits, it traverses the body of the 30S subunit contacting proteins on the other side and probably holding the rRNA structure together. The combined cluster of proteins S8, S12 and S17 appears to hold together the shoulder and platform of the 30S subunit. This chain is Small ribosomal subunit protein uS12, found in Burkholderia orbicola (strain MC0-3).